Consider the following 157-residue polypeptide: Small ribosomal subunit protein uS7 (157 aa).

It belongs to the universal ribosomal protein uS7 family. Part of the 30S ribosomal subunit. Contacts proteins S9 and S11.

Functionally, one of the primary rRNA binding proteins, it binds directly to 16S rRNA where it nucleates assembly of the head domain of the 30S subunit. Is located at the subunit interface close to the decoding center, probably blocks exit of the E-site tRNA. The polypeptide is Small ribosomal subunit protein uS7 (Borrelia hermsii (strain HS1 / DAH)).